Here is a 256-residue protein sequence, read N- to C-terminus: Beta-fibrinogenase-like (256 aa).

Residues Met-1–Ala-18 form the signal peptide. The propeptide occupies Gln-19 to Leu-24. Residues Val-25–Ala-247 enclose the Peptidase S1 domain. 6 disulfides stabilise this stretch: Cys-31/Cys-161, Cys-49/Cys-65, Cys-96/Cys-254, Cys-140/Cys-208, Cys-172/Cys-187, and Cys-198/Cys-223. Residue Asn-44 is glycosylated (N-linked (GlcNAc...) asparagine). His-64 (charge relay system) is an active-site residue. Residues Asn-78 and Asn-101 are each glycosylated (N-linked (GlcNAc...) asparagine). The active-site Charge relay system is the Asp-108. The N-linked (GlcNAc...) asparagine glycan is linked to Asn-152. The active-site Charge relay system is Ser-202.

This sequence belongs to the peptidase S1 family. Snake venom subfamily. As to quaternary structure, monomer. As to expression, expressed by the venom gland.

Its subcellular location is the secreted. Functionally, snake venom serine protease that has fibrinogenolytic activities by hydrolyzing the beta chain of fibrinogen (FGB). Typical arginine esterase which hydrolyzes esters and amides of arginine. In Daboia siamensis (Eastern Russel's viper), this protein is Beta-fibrinogenase-like.